A 307-amino-acid polypeptide reads, in one-letter code: Glutaminase (307 aa).

Ser-66, Asn-116, Glu-160, Asn-167, Tyr-191, Tyr-243, and Val-261 together coordinate substrate.

Belongs to the glutaminase family. As to quaternary structure, homotetramer.

It carries out the reaction L-glutamine + H2O = L-glutamate + NH4(+). The polypeptide is Glutaminase (Saccharophagus degradans (strain 2-40 / ATCC 43961 / DSM 17024)).